The following is a 603-amino-acid chain: Aspartate--tRNA(Asp/Asn) ligase (603 aa).

Positions 205–208 are aspartate; it reads QLFK. Arginine 227 contacts L-aspartate. Residues 227–229 and glutamine 236 each bind ATP; that span reads RDE. Residue histidine 463 participates in L-aspartate binding. Glutamate 497 provides a ligand contact to ATP. Residue arginine 504 coordinates L-aspartate. Position 549-552 (549-552) interacts with ATP; the sequence is GMDR.

The protein belongs to the class-II aminoacyl-tRNA synthetase family. Type 1 subfamily. Homodimer.

It localises to the cytoplasm. It carries out the reaction tRNA(Asx) + L-aspartate + ATP = L-aspartyl-tRNA(Asx) + AMP + diphosphate. Aspartyl-tRNA synthetase with relaxed tRNA specificity since it is able to aspartylate not only its cognate tRNA(Asp) but also tRNA(Asn). Reaction proceeds in two steps: L-aspartate is first activated by ATP to form Asp-AMP and then transferred to the acceptor end of tRNA(Asp/Asn). In Anaeromyxobacter dehalogenans (strain 2CP-1 / ATCC BAA-258), this protein is Aspartate--tRNA(Asp/Asn) ligase.